The sequence spans 205 residues: ATP-dependent Clp protease proteolytic subunit 2 (205 aa).

Serine 100 (nucleophile) is an active-site residue. The active site involves histidine 125.

This sequence belongs to the peptidase S14 family. Fourteen ClpP subunits assemble into 2 heptameric rings which stack back to back to give a disk-like structure with a central cavity, resembling the structure of eukaryotic proteasomes.

The protein resides in the cytoplasm. The catalysed reaction is Hydrolysis of proteins to small peptides in the presence of ATP and magnesium. alpha-casein is the usual test substrate. In the absence of ATP, only oligopeptides shorter than five residues are hydrolyzed (such as succinyl-Leu-Tyr-|-NHMec, and Leu-Tyr-Leu-|-Tyr-Trp, in which cleavage of the -Tyr-|-Leu- and -Tyr-|-Trp bonds also occurs).. In terms of biological role, cleaves peptides in various proteins in a process that requires ATP hydrolysis. Has a chymotrypsin-like activity. Plays a major role in the degradation of misfolded proteins. The sequence is that of ATP-dependent Clp protease proteolytic subunit 2 from Chlamydia abortus (strain DSM 27085 / S26/3) (Chlamydophila abortus).